A 948-amino-acid polypeptide reads, in one-letter code: RNA polymerase-associated protein RapA (948 aa).

A Helicase ATP-binding domain is found at 164-332 (EVADRIAPRV…FARLRLLDPN (169 aa)). 177-184 (DEVGLGKT) is a binding site for ATP. The DEAH box signature appears at 278–281 (DEAH). The Helicase C-terminal domain maps to 473-627 (RVEWLIDTLK…TCPTGNALQH (155 aa)).

The protein belongs to the SNF2/RAD54 helicase family. RapA subfamily. In terms of assembly, interacts with the RNAP. Has a higher affinity for the core RNAP than for the holoenzyme. Its ATPase activity is stimulated by binding to RNAP.

In terms of biological role, transcription regulator that activates transcription by stimulating RNA polymerase (RNAP) recycling in case of stress conditions such as supercoiled DNA or high salt concentrations. Probably acts by releasing the RNAP, when it is trapped or immobilized on tightly supercoiled DNA. Does not activate transcription on linear DNA. Probably not involved in DNA repair. The protein is RNA polymerase-associated protein RapA of Pseudomonas syringae pv. tomato (strain ATCC BAA-871 / DC3000).